The sequence spans 159 residues: ATP synthase subunit b (159 aa).

The chain crosses the membrane as a helical span at residues Asn2–Val22.

The protein belongs to the ATPase B chain family. In terms of assembly, F-type ATPases have 2 components, F(1) - the catalytic core - and F(0) - the membrane proton channel. F(1) has five subunits: alpha(3), beta(3), gamma(1), delta(1), epsilon(1). F(0) has three main subunits: a(1), b(2) and c(10-14). The alpha and beta chains form an alternating ring which encloses part of the gamma chain. F(1) is attached to F(0) by a central stalk formed by the gamma and epsilon chains, while a peripheral stalk is formed by the delta and b chains.

It localises to the cell membrane. Functionally, f(1)F(0) ATP synthase produces ATP from ADP in the presence of a proton or sodium gradient. F-type ATPases consist of two structural domains, F(1) containing the extramembraneous catalytic core and F(0) containing the membrane proton channel, linked together by a central stalk and a peripheral stalk. During catalysis, ATP synthesis in the catalytic domain of F(1) is coupled via a rotary mechanism of the central stalk subunits to proton translocation. In terms of biological role, component of the F(0) channel, it forms part of the peripheral stalk, linking F(1) to F(0). The polypeptide is ATP synthase subunit b (Clostridium botulinum (strain Loch Maree / Type A3)).